The primary structure comprises 269 residues: 4-hydroxy-tetrahydrodipicolinate reductase (269 aa).

NAD(+)-binding positions include 8–13 and Glu34; that span reads GAAGRM. NADP(+) is bound at residue Arg35. Residues 98 to 100 and 122 to 125 contribute to the NAD(+) site; these read GTT and APNY. His155 (proton donor/acceptor) is an active-site residue. (S)-2,3,4,5-tetrahydrodipicolinate is bound at residue His156. The active-site Proton donor is the Lys159. 165–166 provides a ligand contact to (S)-2,3,4,5-tetrahydrodipicolinate; the sequence is GT.

It belongs to the DapB family.

The protein localises to the cytoplasm. The catalysed reaction is (S)-2,3,4,5-tetrahydrodipicolinate + NAD(+) + H2O = (2S,4S)-4-hydroxy-2,3,4,5-tetrahydrodipicolinate + NADH + H(+). It catalyses the reaction (S)-2,3,4,5-tetrahydrodipicolinate + NADP(+) + H2O = (2S,4S)-4-hydroxy-2,3,4,5-tetrahydrodipicolinate + NADPH + H(+). It participates in amino-acid biosynthesis; L-lysine biosynthesis via DAP pathway; (S)-tetrahydrodipicolinate from L-aspartate: step 4/4. In terms of biological role, catalyzes the conversion of 4-hydroxy-tetrahydrodipicolinate (HTPA) to tetrahydrodipicolinate. The polypeptide is 4-hydroxy-tetrahydrodipicolinate reductase (Vibrio campbellii (strain ATCC BAA-1116)).